The sequence spans 597 residues: MATLSMQVSILNKQLKNLNSFGMRASKLPLVARRVDVSTTRLRPICSASQQVEEETRRSGNYQASIWDNAFIQSFNTNKYRDEKHLNRKEELIAQVKVLLNTKMEAVKQLELIDDLRNLGLTYYFQDEFKKILTCIYNDHKCFKNEQVGDLYFTSLGFRLLRLHGFDVSEEVFSFFKNEDGSDFKASLGENTKDVLQLYEASFLVRVGEVTLEQARVFSTKILEKKVDEGINDEKLLAWIQHSLALPLHWRIQRLEARWFLDAYAARKDMNPLIFELGKIDFHIIQETQLEEVQEVSRWWTNSNLAEKLPFVRDRIVECYFWALGLFEPHEYGYQRKMAAIIITFVTIIDDVYDVYGTLDELQLFTDAIRKWDFESISTLPYYMQVCYLALYTYASELAYDILKDQGFNSISYLQRSWLSLVEGFFQEAKWYYAGYTPTLAEYLENAKVSISSPTIISQVYFTLPNSTERTVVENVYGYHNILYLSGMILRLADDLGTTQFELKRGDVQKAIQCYMKDNNATEKEGQEHVKYLLLEAWKEMNTAMADPDCPLSEDLVDAAANLGRASQFIYLEGDGHGVQHSEIHNQMGGLIFEPYV.

The N-terminal 47 residues, 1-47 (MATLSMQVSILNKQLKNLNSFGMRASKLPLVARRVDVSTTRLRPICS), are a transit peptide targeting the chloroplast. Mn(2+) contacts are provided by D350 and D354. A DDXXD motif motif is present at residues 350-354 (DDVYD). Homodimerization regions lie at residues 356–362 (YGTLDEL) and 428–464 (EAKW…YFTL). D494 and E502 together coordinate Mn(2+).

The protein belongs to the terpene synthase family. In terms of assembly, homodimer. It depends on Mn(2+) as a cofactor. Requires Mg(2+) as cofactor.

Its subcellular location is the plastid. It localises to the chloroplast. The enzyme catalyses (2E)-geranyl diphosphate = gamma-terpinene + diphosphate. It functions in the pathway secondary metabolite biosynthesis; terpenoid biosynthesis. Involved in the biosynthesis of phenolic monoterpenes natural products thymol and carvacrol which have a broad range of biological activities acting as antimicrobial compounds, insecticides, antioxidants and pharmaceutical agents. Monoterpene synthase which catalyzes the conversion of geranyl diphosphate (GPP) to gamma-terpinene and minor amounts of other monoterpenes (e.g. alpha-thujene, alpha-terpinene, myrcene, sabinene, (+)-R-limonene, alpha-pinene and alpha-phellandrene). The polypeptide is Gamma-terpinene synthase, chloroplastic (Thymus caespititius (Cretan thyme)).